The sequence spans 102 residues: Small ribosomal subunit protein uS10 (102 aa).

The protein belongs to the universal ribosomal protein uS10 family. In terms of assembly, part of the 30S ribosomal subunit.

Functionally, involved in the binding of tRNA to the ribosomes. In Streptococcus thermophilus (strain CNRZ 1066), this protein is Small ribosomal subunit protein uS10.